A 314-amino-acid polypeptide reads, in one-letter code: uncharacterized protein (314 aa).

The tract at residues 39-146 (QENVDSDSTD…SDYSSDESNS (108 aa)) is disordered. Polar residues predominate over residues 56–76 (STKNVSRNIPKNIPKSISKNI). Positions 88–131 (IPKNVSKNIPKNVPKNVSKNIPKNIPKNVPNKSRNKYSNYSEDS) are enriched in low complexity. Residues 132 to 141 (NYSEDSDYSS) show a composition bias toward acidic residues.

This is an uncharacterized protein from Acanthamoeba polyphaga mimivirus (APMV).